We begin with the raw amino-acid sequence, 441 residues long: Probable cyclic di-GMP phosphodiesterase VC_1348 (441 aa).

Residues 72–187 (TILIVDDSPD…LLKSRVHTHL (116 aa)) enclose the Response regulatory domain. Asp120 is modified (4-aspartylphosphate). The HD-GYP domain maps to 214-425 (LDRMQDAVVF…FIDIAQKFAD (212 aa)).

The enzyme catalyses 3',3'-c-di-GMP + 2 H2O = 2 GMP + 2 H(+). In terms of biological role, probable phosphodiesterase (PDE) that catalyzes the hydrolysis of cyclic diguanylate (c-di-GMP). Increases motility and decreases biofilm formation in vivo. The chain is Probable cyclic di-GMP phosphodiesterase VC_1348 from Vibrio cholerae serotype O1 (strain ATCC 39315 / El Tor Inaba N16961).